The following is a 117-amino-acid chain: Regulator of ribonuclease activity B (117 aa).

The protein belongs to the RraB family. In terms of assembly, interacts with the C-terminal region of Rne.

The protein localises to the cytoplasm. Globally modulates RNA abundance by binding to RNase E (Rne) and regulating its endonucleolytic activity. Can modulate Rne action in a substrate-dependent manner by altering the composition of the degradosome. The protein is Regulator of ribonuclease activity B of Pseudoalteromonas atlantica (strain T6c / ATCC BAA-1087).